The chain runs to 230 residues: Cytidylate kinase (230 aa).

An ATP-binding site is contributed by 12–20 (GPSGAGKGT).

This sequence belongs to the cytidylate kinase family. Type 1 subfamily.

The protein resides in the cytoplasm. The enzyme catalyses CMP + ATP = CDP + ADP. It catalyses the reaction dCMP + ATP = dCDP + ADP. This chain is Cytidylate kinase, found in Shewanella sp. (strain MR-4).